A 237-amino-acid chain; its full sequence is Ribonuclease PH (237 aa).

Phosphate is bound by residues Arg-86 and Gly-124 to Arg-126.

This sequence belongs to the RNase PH family. In terms of assembly, homohexameric ring arranged as a trimer of dimers.

The catalysed reaction is tRNA(n+1) + phosphate = tRNA(n) + a ribonucleoside 5'-diphosphate. In terms of biological role, phosphorolytic 3'-5' exoribonuclease that plays an important role in tRNA 3'-end maturation. Removes nucleotide residues following the 3'-CCA terminus of tRNAs; can also add nucleotides to the ends of RNA molecules by using nucleoside diphosphates as substrates, but this may not be physiologically important. Probably plays a role in initiation of 16S rRNA degradation (leading to ribosome degradation) during starvation. The chain is Ribonuclease PH from Nitrobacter hamburgensis (strain DSM 10229 / NCIMB 13809 / X14).